We begin with the raw amino-acid sequence, 200 residues long: MARFRGSNWKKSRRLGISLSGTGKELEKRPYAPGQHGPNQRKKLSEYGLQLREKQKLRYLYGMTERQFRNTFDIAGKQYGVHGENFMILLASRLDAVVYSLGLARTRRQARQLVNHGHIEVDGGRVDIPSYSLKPGQVITVREKSQNLDIIKESVEINNFVPEYLDFDADNLKGTFVRFPERSELPAEINEQLIVEYYSR.

The S4 RNA-binding domain maps to 92–155; sequence SRLDAVVYSL…QNLDIIKESV (64 aa).

It belongs to the universal ribosomal protein uS4 family. Part of the 30S ribosomal subunit. Contacts protein S5. The interaction surface between S4 and S5 is involved in control of translational fidelity.

Its function is as follows. One of the primary rRNA binding proteins, it binds directly to 16S rRNA where it nucleates assembly of the body of the 30S subunit. In terms of biological role, with S5 and S12 plays an important role in translational accuracy. In Staphylococcus epidermidis (strain ATCC 35984 / DSM 28319 / BCRC 17069 / CCUG 31568 / BM 3577 / RP62A), this protein is Small ribosomal subunit protein uS4.